A 107-amino-acid polypeptide reads, in one-letter code: ATP-dependent Clp protease adapter protein ClpS (107 aa).

This sequence belongs to the ClpS family. As to quaternary structure, binds to the N-terminal domain of the chaperone ClpA.

In terms of biological role, involved in the modulation of the specificity of the ClpAP-mediated ATP-dependent protein degradation. The polypeptide is ATP-dependent Clp protease adapter protein ClpS (Syntrophus aciditrophicus (strain SB)).